Reading from the N-terminus, the 496-residue chain is Angiopoietin-2 (496 aa).

Positions 1 to 18 are cleaved as a signal peptide; that stretch reads MWQIIFLTFGWDLVLASA. Residues N89, N119, N133, N151, N240, and N304 are each glycosylated (N-linked (GlcNAc...) asparagine). A coiled-coil region spans residues 159–256; it reads QLLQHSISTN…QQHDLMETVN (98 aa). The Fibrinogen C-terminal domain maps to 275-495; sequence KEEQTTFRDC…ATTMMIRPAD (221 aa). Cysteines 284 and 313 form a disulfide. Residues D429, D431, C433, and C435 each contribute to the Ca(2+) site. 2 cysteine pairs are disulfide-bonded: C433-C435 and C437-C450.

In terms of assembly, interacts with TEK/TIE2, competing for the same binding site as ANGPT1. Interacts with ITGA5. Interacts with SVEP1/polydom. Interacts with THBD; this interaction significantly inhibits the generation of activated PC and TAFIa/CPB2 by the thrombin/thrombomodulin complex. As to expression, expressed in the ovary, uterus and placenta.

It is found in the secreted. In terms of biological role, binds to TEK/TIE2, competing for the ANGPT1 binding site, and modulating ANGPT1 signaling. Can induce tyrosine phosphorylation of TEK/TIE2 in the absence of ANGPT1. In the absence of angiogenic inducers, such as VEGF, ANGPT2-mediated loosening of cell-matrix contacts may induce endothelial cell apoptosis with consequent vascular regression. In concert with VEGF, it may facilitate endothelial cell migration and proliferation, thus serving as a permissive angiogenic signal. Involved in the regulation of lymphangiogenesis. This Mus musculus (Mouse) protein is Angiopoietin-2 (Angpt2).